Here is a 154-residue protein sequence, read N- to C-terminus: MKTYSAKPSEVDRKWYVIDAEGVVLGRLAVIIADLLRGKNKTIYTPHIDTGDHVVVINAEKVHLTGNKAANERFFWHTGHPGGIKSRSLGQIRDGAHPERLIEKAVERMMPRGPLARAQFKKLRVYGGEAHPHDAQQPVVLDVAALNPKNKRSA.

This sequence belongs to the universal ribosomal protein uL13 family. Part of the 50S ribosomal subunit.

Functionally, this protein is one of the early assembly proteins of the 50S ribosomal subunit, although it is not seen to bind rRNA by itself. It is important during the early stages of 50S assembly. The chain is Large ribosomal subunit protein uL13 from Rhodospirillum rubrum (strain ATCC 11170 / ATH 1.1.1 / DSM 467 / LMG 4362 / NCIMB 8255 / S1).